The sequence spans 89 residues: Cell division topological specificity factor (89 aa).

This sequence belongs to the MinE family.

Functionally, prevents the cell division inhibition by proteins MinC and MinD at internal division sites while permitting inhibition at polar sites. This ensures cell division at the proper site by restricting the formation of a division septum at the midpoint of the long axis of the cell. The chain is Cell division topological specificity factor from Serratia proteamaculans (strain 568).